A 457-amino-acid chain; its full sequence is Gamma-aminobutyric acid receptor subunit gamma-4 (457 aa).

Residues 1-21 form the signal peptide; it reads MPAMVLLLCLALGPALRSARC. The Extracellular segment spans residues 22-256; the sequence is ESTEEYDYDY…VSFDLSRRMG (235 aa). N-linked (GlcNAc...) asparagine glycosylation is found at Asn-35 and Asn-112. The cysteines at positions 173 and 187 are disulfide-linked. Asn-230 is a glycosylation site (N-linked (GlcNAc...) asparagine). The next 3 helical transmembrane spans lie at 257-279, 283-305, and 317-339; these read YFAIQTYIPCILTVVLSWVSFWI, STPARTSLGITTVLTMTTLSTIS, and AMDLFVSVCFIFVFAALMEYATL. Topologically, residues 340–433 are cytoplasmic; the sequence is NYLVGNKKPL…VRIHISRLDS (94 aa). Residues 434–457 traverse the membrane as a helical segment; the sequence is YSRVFFPTAFLLFNIVYWIAYLYL.

The protein belongs to the ligand-gated ion channel (TC 1.A.9) family. Gamma-aminobutyric acid receptor (TC 1.A.9.5) subfamily. GABRG4 sub-subfamily. Generally pentameric. There are five types of GABA(A) receptor chains: alpha, beta, gamma, delta, and rho. As to expression, abundant in several brain regions, including the ectostriatum, nucleus rotundus and hyperstriatum ventrale.

The protein localises to the postsynaptic cell membrane. Its subcellular location is the cell membrane. Functionally, GABA, the major inhibitory neurotransmitter in the vertebrate brain, mediates neuronal inhibition by binding to the GABA/benzodiazepine receptor and opening an integral chloride channel. The polypeptide is Gamma-aminobutyric acid receptor subunit gamma-4 (GABRG4) (Gallus gallus (Chicken)).